The sequence spans 225 residues: UPF0758 protein XAC3915 (225 aa).

Residues 102–224 enclose the MPN domain; that stretch reads ALSDPPSVGR…PVSFAERGWL (123 aa). Residues His173, His175, and Asp186 each coordinate Zn(2+). The short motif at 173–186 is the JAMM motif element; that stretch reads HNHPSGNPEPSEAD.

Belongs to the UPF0758 family.

This chain is UPF0758 protein XAC3915, found in Xanthomonas axonopodis pv. citri (strain 306).